Here is a 108-residue protein sequence, read N- to C-terminus: Class I hydrophobin 3 (108 aa).

A signal peptide spans 1–17 (MFFQTTIVAALASLAVA). 4 disulfide bridges follow: C28–C87, C35–C81, C36–C69, and C88–C101. A glycan (N-linked (GlcNAc...) asparagine) is linked at N37.

It belongs to the fungal hydrophobin family. In terms of assembly, self-assembles to form functional amyloid fibrils called rodlets. Self-assembly into fibrillar rodlets occurs spontaneously at hydrophobic:hydrophilic interfaces and the rodlets further associate laterally to form amphipathic monolayers.

It is found in the secreted. The protein resides in the cell wall. In terms of biological role, aerial growth, conidiation, and dispersal of filamentous fungi in the environment rely upon a capability of their secreting small amphipathic proteins called hydrophobins (HPBs) with low sequence identity. Class I can self-assemble into an outermost layer of rodlet bundles on aerial cell surfaces, conferring cellular hydrophobicity that supports fungal growth, development and dispersal; whereas Class II form highly ordered films at water-air interfaces through intermolecular interactions but contribute nothing to the rodlet structure. Vmh3 is a class I hydrophobin that is essential for the maintenance of the surface hydrophobicity of the mycelium and might be involved in the development of fruiting bodies. Plays an important role in hyphal resistance against environmental stress. Necessary for the efficient biodegradation of lignin. The protein is Class I hydrophobin 3 of Pleurotus ostreatus (strain PC15) (Oyster mushroom).